The following is a 1055-amino-acid chain: Ephrin type-B receptor 2 (1055 aa).

The signal sequence occupies residues 1–18 (MALRRLGAALLLLPLLAA). The Extracellular portion of the chain corresponds to 19–543 (VEETLMDSTT…QTSIQEKLPL (525 aa)). Residues 20–202 (EETLMDSTTA…FYRKCPRIIQ (183 aa)) enclose the Eph LBD domain. Intrachain disulfides connect Cys62/Cys184 and Cys97/Cys107. N-linked (GlcNAc...) asparagine glycosylation is found at Asn265, Asn336, Asn428, and Asn482. Fibronectin type-III domains are found at residues 324-434 (IPSA…TNQA) and 435-530 (APSA…TMTE). The helical transmembrane segment at 544–564 (IIGSSAAGLVFLIAVVVIAIV) threads the bilayer. Residues 565 to 1055 (CNRRGFERAD…KESNDCSCGG (491 aa)) lie on the Cytoplasmic side of the membrane. The region spanning 621–884 (VKIEQVIGAG…QIVNTLDKMI (264 aa)) is the Protein kinase domain. ATP-binding positions include 627 to 635 (IGAGEFGEV) and Lys653. The active-site Proton acceptor is the Asp746. A Glycyl lysine isopeptide (Lys-Gly) (interchain with G-Cter in ubiquitin) cross-link involves residue Lys891. The 65-residue stretch at 913 to 977 (TSFNTVDEWL…LNSIQVMRAQ (65 aa)) folds into the SAM domain. Phosphoserine occurs at positions 983 and 984. The PDZ-binding (in isoform 2) signature appears at 984 to 986 (VEG). Residues 990–1055 (ARRPRATGRT…KESNDCSCGG (66 aa)) form a disordered region. Positions 991 to 1002 (RRPRATGRTKRC) are enriched in basic residues. Positions 1025-1049 (KKTDPGRGREIQGIFFKEDSHKESN) are enriched in basic and acidic residues.

It belongs to the protein kinase superfamily. Tyr protein kinase family. Ephrin receptor subfamily. In terms of assembly, heterotetramer upon binding of the ligand. The heterotetramer is composed of an ephrin dimer and a receptor dimer. Interacts (via PDZ-binding motif) with GRIP1 and PICK1 (via PDZ domain). Interacts with ARHGEF15; mediates ARHGEF15 phosphorylation, ubiquitination and degradation by the proteasome. Interacts with AQP1; involved in endolymph production in the inner ear. Interacts with SPSB1 and SPSB4. The phosphorylated form interacts with RASA1 (via SH2 domain 1). Interacts with EFNA5. Interacts with SH2D3C. In terms of processing, autophosphorylated; ligand binding stimulates autophosphorylation on tyrosine residues. Polyubiquitinated; ligand binding stimulates ubiquitination. Ubiquitinated by RNF186 at Lys-891, mainly through 'Lys-27'-linked polyubiquitin chains. Ubiquitinated by CRL2(KLHDC2) E3 ligase complex. Post-translationally, ligand binding induces cleavage by matrix metalloproteinases (MMPs) such as MMP7/MMP9, producing an EphB2/N-terminal fragment (NTF) and a C-terminal long fragment (EphB2-LF). EphB2-LF is further cleaved by MMPs, producing EphB2/CTF1 which is further cleaved by the PS1/gamma-secretase producing EphB2/CTF2. Brain, heart, lung, kidney, placenta, pancreas, liver and skeletal muscle. Preferentially expressed in fetal brain.

It localises to the cell membrane. Its subcellular location is the cell projection. The protein resides in the axon. It is found in the dendrite. The catalysed reaction is L-tyrosyl-[protein] + ATP = O-phospho-L-tyrosyl-[protein] + ADP + H(+). Functionally, receptor tyrosine kinase which binds promiscuously transmembrane ephrin-B family ligands residing on adjacent cells, leading to contact-dependent bidirectional signaling into neighboring cells. The signaling pathway downstream of the receptor is referred to as forward signaling while the signaling pathway downstream of the ephrin ligand is referred to as reverse signaling. Functions in axon guidance during development. Involved in the guidance of commissural axons, that form a major interhemispheric connection between the 2 temporal lobes of the cerebral cortex. Also involved in guidance of contralateral inner ear efferent growth cones at the midline and of retinal ganglion cell axons to the optic disk. In addition to axon guidance, also regulates dendritic spines development and maturation and stimulates the formation of excitatory synapses. Upon activation by EFNB1, abolishes the ARHGEF15-mediated negative regulation on excitatory synapse formation. Controls other aspects of development including angiogenesis, palate development and in inner ear development through regulation of endolymph production. Forward and reverse signaling through the EFNB2/EPHB2 complex regulate movement and adhesion of cells that tubularize the urethra and septate the cloaca. May function as a tumor suppressor. May be involved in the regulation of platelet activation and blood coagulation. In Homo sapiens (Human), this protein is Ephrin type-B receptor 2 (EPHB2).